Here is a 204-residue protein sequence, read N- to C-terminus: DNA-directed RNA polymerase III subunit RPC8 (204 aa).

The disordered stretch occupies residues 158–178 (VDTSPTGPSSAEAASSSEELP). The span at 166–175 (SSAEAASSSE) shows a compositional bias: low complexity.

Belongs to the eukaryotic RPB7/RPC8 RNA polymerase subunit family. As to quaternary structure, component of the RNA polymerase III complex consisting of 17 subunits: a ten-subunit horseshoe-shaped catalytic core composed of POLR3A/RPC1, POLR3B/RPC2, POLR1C/RPAC1, POLR1D/RPAC2, POLR3K/RPC10, POLR2E/RPABC1, POLR2F/RPABC2, POLR2H/RPABC3, POLR2K/RPABC4 and POLR2L/RPABC5; a mobile stalk composed of two subunits POLR3H/RPC8 and CRCP/RPC9, protruding from the core and functioning primarily in transcription initiation; and additional subunits homologous to general transcription factors of the RNA polymerase II machinery, POLR3C/RPC3-POLR3F/RPC6-POLR3G/RPC7 heterotrimer required for transcription initiation and POLR3D/RPC4-POLR3E/RPC5 heterodimer involved in both transcription initiation and termination. Interacts with CRCP/RPC9. POLR3H/RPC8 and CRCP/RPC9 probably form a Pol III subcomplex.

It is found in the nucleus. DNA-dependent RNA polymerase catalyzes the transcription of DNA into RNA using the four ribonucleoside triphosphates as substrates. Specific peripheric component of RNA polymerase III (Pol III) which synthesizes small non-coding RNAs including 5S rRNA, snRNAs, tRNAs and miRNAs from at least 500 distinct genomic loci. With CRCP/RPC9 forms a mobile stalk that protrudes from Pol III core and functions primarily in transcription initiation. Pol III plays a key role in sensing and limiting infection by intracellular bacteria and DNA viruses. Acts as nuclear and cytosolic DNA sensor involved in innate immune response. Can sense non-self dsDNA that serves as template for transcription into dsRNA. The non-self RNA polymerase III transcripts, such as Epstein-Barr virus-encoded RNAs (EBERs) induce type I interferon and NF-kappa-B through the RIG-I pathway. In Bos taurus (Bovine), this protein is DNA-directed RNA polymerase III subunit RPC8 (POLR3H).